Here is an 89-residue protein sequence, read N- to C-terminus: Small ribosomal subunit protein uS15 (89 aa).

Belongs to the universal ribosomal protein uS15 family. As to quaternary structure, part of the 30S ribosomal subunit. Forms a bridge to the 50S subunit in the 70S ribosome, contacting the 23S rRNA.

In terms of biological role, one of the primary rRNA binding proteins, it binds directly to 16S rRNA where it helps nucleate assembly of the platform of the 30S subunit by binding and bridging several RNA helices of the 16S rRNA. Its function is as follows. Forms an intersubunit bridge (bridge B4) with the 23S rRNA of the 50S subunit in the ribosome. The sequence is that of Small ribosomal subunit protein uS15 from Bacteroides fragilis (strain ATCC 25285 / DSM 2151 / CCUG 4856 / JCM 11019 / LMG 10263 / NCTC 9343 / Onslow / VPI 2553 / EN-2).